The sequence spans 173 residues: Large ribosomal subunit protein uL10 (173 aa).

This sequence belongs to the universal ribosomal protein uL10 family. In terms of assembly, part of the ribosomal stalk of the 50S ribosomal subunit. The N-terminus interacts with L11 and the large rRNA to form the base of the stalk. The C-terminus forms an elongated spine to which L12 dimers bind in a sequential fashion forming a multimeric L10(L12)X complex.

Functionally, forms part of the ribosomal stalk, playing a central role in the interaction of the ribosome with GTP-bound translation factors. In Chloroherpeton thalassium (strain ATCC 35110 / GB-78), this protein is Large ribosomal subunit protein uL10.